Consider the following 298-residue polypeptide: Heterogeneous nuclear ribonucleoprotein C (298 aa).

Position 2 is an N-acetylalanine (A2). Glycyl lysine isopeptide (Lys-Gly) (interchain with G-Cter in SUMO2) cross-links involve residues K8, K50, K89, and K94. The RRM domain occupies S16–E87. Phosphoserine is present on S108. Disordered regions lie at residues P131–D177 and E204–S298. The short motif at P142–V148 is the Nuclear localization signal element. Phosphoserine is present on residues S149 and S153. The segment covering S162–S173 has biased composition (low complexity). K163 is modified (N6-acetyllysine; alternate). K163 is covalently cross-linked (Glycyl lysine isopeptide (Lys-Gly) (interchain with G-Cter in SUMO2); alternate). Residues G176–A211 are a coiled coil. Residue K209 forms a Glycyl lysine isopeptide (Lys-Gly) (interchain with G-Cter in SUMO2) linkage. S214, S216, and S217 each carry phosphoserine. Residue K222 forms a Glycyl lysine isopeptide (Lys-Gly) (interchain with G-Cter in SUMO2) linkage. A Glycyl lysine isopeptide (Lys-Gly) (interchain with G-Cter in SUMO2); alternate cross-link involves residue K225. Residue K225 forms a Glycyl lysine isopeptide (Lys-Gly) (interchain with G-Cter in SUMO1); alternate linkage. A phosphoserine mark is found at S226, S231, S232, and S234. Residues V235 to S246 are compositionally biased toward basic and acidic residues. Residues K236 and K237 each participate in a glycyl lysine isopeptide (Lys-Gly) (interchain with G-Cter in SUMO2) cross-link. A Glycyl lysine isopeptide (Lys-Gly) (interchain with G-Cter in SUMO2); alternate cross-link involves residue K243. K243 participates in a covalent cross-link: Glycyl lysine isopeptide (Lys-Gly) (interchain with G-Cter in SUMO); alternate. Phosphoserine occurs at positions 246 and 253. Positions A248–G269 are enriched in acidic residues. A compositionally biased stretch (basic and acidic residues) spans D270–E279. Residues K280–S298 show a composition bias toward acidic residues. A phosphoserine mark is found at S291 and S298.

This sequence belongs to the RRM HNRPC family. RALY subfamily. As to quaternary structure, tetramer composed of 3 copies of isoform C1 and 1 copy of isoform C2. Assembly of 3 tetramers with bound pre-mRNA gives rise to a 19S complex that interacts with HNRNPA2B1 tetramers. Component of the 40S hnRNP particle. Identified in the spliceosome C complex. Interacts with IGF2BP1. Interacts with PPIA/CYPA. Phosphorylated on Ser-253 and Ser-291 in resting cells. In terms of processing, sumoylated. Sumoylation reduces affinity for mRNA. Post-translationally, ubiquitinated and degraded after nucleo-cytoplasmic transport by YWHAE.

The protein resides in the nucleus. In terms of biological role, binds pre-mRNA and nucleates the assembly of 40S hnRNP particles. Interacts with poly-U tracts in the 3'-UTR or 5'-UTR of mRNA and modulates the stability and the level of translation of bound mRNA molecules. Single HNRNPC tetramers bind 230-240 nucleotides. Trimers of HNRNPC tetramers bind 700 nucleotides. May play a role in the early steps of spliceosome assembly and pre-mRNA splicing. N6-methyladenosine (m6A) has been shown to alter the local structure in mRNAs and long non-coding RNAs (lncRNAs) via a mechanism named 'm(6)A-switch', facilitating binding of HNRNPC, leading to regulation of mRNA splicing. The sequence is that of Heterogeneous nuclear ribonucleoprotein C from Rattus norvegicus (Rat).